A 440-amino-acid polypeptide reads, in one-letter code: MATRSCREKAQKLNEQHQLILSKLLREEDNKYCADCEAKGPRWASWNIGVFICIRCAGIHRNLGVHISRVKSVNLDQWTPEQIQCMQDMGNTKARLLYEANLPENFRRPQTDQAVEFFIRDKYEKKKYYDKNAIAITNKEKEKKKDEKKREKEPEKPAKPLTTEKLPKKEEQQLEPKKSTSPKNAAEPTIDLLGLDGPAEAPVTNGNPATAPALSDDLDIFGPMISNPLPAAVMPPAQGTASVPAPATLSTVTSGDLDLFTEQTTKSEEVAKKQLSKDSILSLYGTGAQQSTPGVFMGPTNIPFTSQAPTAFQGFPSMGVPVPAAPGLIGNMMGQNTGMMVGMPMHNGFMGNAQTGVMPLPQNVVGPQGGMVGQMGAPQSKFGLPQAQQPQWNLSQMNQQMAAMNLSSANASAGFGQPPSTTAGWSGSSSGQTLSTQLWK.

One can recognise an Arf-GAP domain in the interval 18 to 143 (QLILSKLLRE…IAITNKEKEK (126 aa)). A C4-type zinc finger spans residues 33-56 (CADCEAKGPRWASWNIGVFICIRC). Composition is skewed to basic and acidic residues over residues 140–158 (EKEK…EKPA) and 165–178 (KLPK…EPKK). Disordered regions lie at residues 140–211 (EKEK…PATA) and 410–440 (NASA…QLWK). The Interaction with clathrin heavy chains motif lies at 192-196 (LLGLD). Residues 420-440 (STTAGWSGSSSGQTLSTQLWK) are compositionally biased toward low complexity.

Interacts with ARF6. Interacts with clathrin heavy chains via the clathrin box-like motif. In terms of tissue distribution, detected in adult brain, lung, heart, liver, ovary and bone marrow. Detected in stromal cells of the red pulp of adult spleen.

The protein resides in the cell membrane. GTPase activating protein that acts on ARF6. Plays a role in clathrin-dependent endocytosis. May play a role in erythropoiesis. The sequence is that of Stromal membrane-associated protein 1 (Smap1) from Mus musculus (Mouse).